The chain runs to 510 residues: NAD(P)H-quinone oxidoreductase subunit 2 B, chloroplastic (510 aa).

13 helical membrane-spanning segments follow: residues 24–44 (LLLFNGSFILPECILIFGLIL), 59–79 (WFYFISSTSLVMSITALLFRW), 99–119 (IFQFLILLCSTLCIPLSVEYI), 124–144 (MAITEFLLFILTATLGGMFLC), 149–169 (LITIFVALECFSLCSYLLSGY), 184–204 (LLMGGASSSILVHGFSWLYGL), 229–249 (ISIALIFITVGIGFKLSLAPF), 262–284 (TPVVAFLSVTSKVAASALATRIF), 295–315 (WHLLLEILAILSMILGNLIAI), 323–343 (MLAYSSIGQIGYVIIGIIVGD), 354–374 (YMLFYIAMNLGTFARIVLFGL), 395–415 (ALSLALCLLSLGGLPPLAGFF), and 418–438 (LHLFWCGWQAGLYFLVSIGLL).

The protein belongs to the complex I subunit 2 family. NDH is composed of at least 16 different subunits, 5 of which are encoded in the nucleus.

It localises to the plastid. The protein resides in the chloroplast thylakoid membrane. It catalyses the reaction a plastoquinone + NADH + (n+1) H(+)(in) = a plastoquinol + NAD(+) + n H(+)(out). The enzyme catalyses a plastoquinone + NADPH + (n+1) H(+)(in) = a plastoquinol + NADP(+) + n H(+)(out). In terms of biological role, NDH shuttles electrons from NAD(P)H:plastoquinone, via FMN and iron-sulfur (Fe-S) centers, to quinones in the photosynthetic chain and possibly in a chloroplast respiratory chain. The immediate electron acceptor for the enzyme in this species is believed to be plastoquinone. Couples the redox reaction to proton translocation, and thus conserves the redox energy in a proton gradient. The chain is NAD(P)H-quinone oxidoreductase subunit 2 B, chloroplastic from Lemna minor (Common duckweed).